The primary structure comprises 337 residues: Protein-methionine-sulfoxide reductase catalytic subunit MsrP (337 aa).

The tat-type signal signal peptide spans 1-50 (MLIKLPSASGSKESDVTPESIYLSRRTLLASSLAGLAVTALPRWASAADA). Mo-molybdopterin-binding positions include Asn94, 97–98 (YE), Cys152, Thr187, Asn237, Arg242, and 253–255 (SVK).

Belongs to the MsrP family. In terms of assembly, heterodimer of a catalytic subunit (MsrP) and a heme-binding subunit (MsrQ). Mo-molybdopterin serves as cofactor. Predicted to be exported by the Tat system. The position of the signal peptide cleavage has not been experimentally proven.

Its subcellular location is the periplasm. It catalyses the reaction L-methionyl-[protein] + a quinone + H2O = L-methionyl-(S)-S-oxide-[protein] + a quinol. It carries out the reaction L-methionyl-[protein] + a quinone + H2O = L-methionyl-(R)-S-oxide-[protein] + a quinol. In terms of biological role, part of the MsrPQ system that repairs oxidized periplasmic proteins containing methionine sulfoxide residues (Met-O), using respiratory chain electrons. Thus protects these proteins from oxidative-stress damage caused by reactive species of oxygen and chlorine generated by the host defense mechanisms. MsrPQ is essential for the maintenance of envelope integrity under bleach stress, rescuing a wide series of structurally unrelated periplasmic proteins from methionine oxidation. The catalytic subunit MsrP is non-stereospecific, being able to reduce both (R-) and (S-) diastereoisomers of methionine sulfoxide. The chain is Protein-methionine-sulfoxide reductase catalytic subunit MsrP from Pseudomonas syringae pv. tomato (strain ATCC BAA-871 / DC3000).